Here is a 292-residue protein sequence, read N- to C-terminus: Tissue factor (292 aa).

An N-terminal signal peptide occupies residues 1–35 (MATPNGPRVPCPQAAVARALLFGLVLIQGAGVAGT). The Extracellular segment spans residues 36–248 (TDVVVAYNIT…TSHEKVLSTE (213 aa)). The N-linked (GlcNAc...) asparagine glycan is linked to N43. Positions 46–48 (WKS) match the WKS motif motif. Cysteines 81 and 89 form a disulfide. N-linked (GlcNAc...) asparagine glycosylation is found at N153 and N181. C215 and C238 form a disulfide bridge. Residues 249–271 (LFFIIGTVMLVIIIFIVVLSVSL) traverse the membrane as a helical segment. Topologically, residues 272 to 292 (HKCRKVRAERSGKENTPLNAA) are cytoplasmic. The S-palmitoyl cysteine moiety is linked to residue C274.

This sequence belongs to the tissue factor family. Interacts with HSPE; the interaction, inhibited by heparin, promotes the generation of activated factor X and activates coagulation in the presence of activated factor VII.

Its subcellular location is the membrane. Its function is as follows. Initiates blood coagulation by forming a complex with circulating factor VII or VIIa. The [TF:VIIa] complex activates factors IX or X by specific limited proteolysis. TF plays a role in normal hemostasis by initiating the cell-surface assembly and propagation of the coagulation protease cascade. In Bos taurus (Bovine), this protein is Tissue factor (F3).